Consider the following 98-residue polypeptide: uncharacterized protein (98 aa).

Residues 1–19 form the signal peptide; that stretch reads MTERRRALSLAAVVDSINL. The disordered stretch occupies residues 40-98; sequence PPGGSFSGIKRESRRKRPSRNEIYGGGVLEQEVRMRRWSKTASPPVSLHHRPLGPARKP. The segment covering 87–98 has biased composition (basic residues); that stretch reads LHHRPLGPARKP.

This is an uncharacterized protein from Homo sapiens (Human).